The following is a 344-amino-acid chain: Ubiquitin-associated domain-containing protein 2 (344 aa).

The N-terminal stretch at 1–34 (MFTSTGSNGLYKAPLSKSLLLVPSAISILLTLLF) is a signal peptide. Topologically, residues 35–91 (QHYQKFFAYNLQAIKEDFQIWRLVCGRVICLDLKDTFCSSLLIYNFRIFERRYGSRK) are extracellular. A helical transmembrane segment spans residues 92–111 (FSSFLLGAWTLSALFDLLLV). The Cytoplasmic segment spans residues 112–123 (EAAQYVFGITIN). A helical transmembrane segment spans residues 124–142 (SLPSGFLGPVFALFVPFYC). At 143–162 (SIPRVQVTQVLGYFSITNKT) the chain is on the extracellular side. A glycan (N-linked (GlcNAc...) asparagine) is linked at N160. A helical transmembrane segment spans residues 163–183 (LVYILGLQLLTSGSYIWILAL). The Cytoplasmic portion of the chain corresponds to 184–344 (SGLISGICYN…NVATNFLLQH (161 aa)). Residues 284-307 (RHNENYQDHHPSDQDTPPPTEVSE) are disordered. Residues 286-296 (NENYQDHHPSD) are compositionally biased toward basic and acidic residues. The 41-residue stretch at 304–344 (EVSEEQVARLMEMGFSRGDALEALRASNNDLNVATNFLLQH) folds into the UBA domain.

The protein resides in the endoplasmic reticulum membrane. Its function is as follows. Restricts trafficking of FAF2 from the endoplasmic reticulum to lipid droplets. May negatively regulate the canonical Wnt signaling pathway in the lymphocytes. This chain is Ubiquitin-associated domain-containing protein 2 (UBAC2), found in Gallus gallus (Chicken).